The chain runs to 132 residues: Small ribosomal subunit protein uS8 (132 aa).

It belongs to the universal ribosomal protein uS8 family. Part of the 30S ribosomal subunit. Contacts proteins S5 and S12.

One of the primary rRNA binding proteins, it binds directly to 16S rRNA central domain where it helps coordinate assembly of the platform of the 30S subunit. The sequence is that of Small ribosomal subunit protein uS8 from Limosilactobacillus reuteri (strain DSM 20016) (Lactobacillus reuteri).